A 369-amino-acid polypeptide reads, in one-letter code: tRNA/tmRNA (uracil-C(5))-methyltransferase (369 aa).

The S-adenosyl-L-methionine site is built by Gln-190, Tyr-218, Asn-223, Glu-239, and Asp-301. Cys-326 functions as the Nucleophile in the catalytic mechanism. The active-site Proton acceptor is the Glu-360.

It belongs to the class I-like SAM-binding methyltransferase superfamily. RNA M5U methyltransferase family. TrmA subfamily.

The catalysed reaction is uridine(54) in tRNA + S-adenosyl-L-methionine = 5-methyluridine(54) in tRNA + S-adenosyl-L-homocysteine + H(+). The enzyme catalyses uridine(341) in tmRNA + S-adenosyl-L-methionine = 5-methyluridine(341) in tmRNA + S-adenosyl-L-homocysteine + H(+). Its function is as follows. Dual-specificity methyltransferase that catalyzes the formation of 5-methyluridine at position 54 (m5U54) in all tRNAs, and that of position 341 (m5U341) in tmRNA (transfer-mRNA). The protein is tRNA/tmRNA (uracil-C(5))-methyltransferase of Vibrio atlanticus (strain LGP32) (Vibrio splendidus (strain Mel32)).